We begin with the raw amino-acid sequence, 180 residues long: MAVIKVRKTGQVIEGEDNVRAFLNSQGVLYEHWDITKLPEHLRDKYVLTDEEKNEILATFKDEIEDLAARRGYKTWDIVALSDATPNLDELLKKFEQVHIHTEDEVRAITAGHGIFIIKGDKETGYFDVELEAGDVISVPEGNPHYFTLMDDRRVVAVRLFIDPSGWVAHPYEEKEEAVQ.

Fe(2+)-binding residues include His99, His101, Glu105, and His145. Positions 99, 101, 105, and 145 each coordinate Ni(2+).

Belongs to the acireductone dioxygenase (ARD) family. As to quaternary structure, monomer. Fe(2+) is required as a cofactor. Ni(2+) serves as cofactor.

The catalysed reaction is 1,2-dihydroxy-5-(methylsulfanyl)pent-1-en-3-one + O2 = 3-(methylsulfanyl)propanoate + CO + formate + 2 H(+). It catalyses the reaction 1,2-dihydroxy-5-(methylsulfanyl)pent-1-en-3-one + O2 = 4-methylsulfanyl-2-oxobutanoate + formate + 2 H(+). Its pathway is amino-acid biosynthesis; L-methionine biosynthesis via salvage pathway; L-methionine from S-methyl-5-thio-alpha-D-ribose 1-phosphate: step 5/6. Catalyzes 2 different reactions between oxygen and the acireductone 1,2-dihydroxy-3-keto-5-methylthiopentene (DHK-MTPene) depending upon the metal bound in the active site. Fe-containing acireductone dioxygenase (Fe-ARD) produces formate and 2-keto-4-methylthiobutyrate (KMTB), the alpha-ketoacid precursor of methionine in the methionine recycle pathway. Ni-containing acireductone dioxygenase (Ni-ARD) produces methylthiopropionate, carbon monoxide and formate, and does not lie on the methionine recycle pathway. The sequence is that of Acireductone dioxygenase from Geobacillus kaustophilus (strain HTA426).